The following is a 236-amino-acid chain: tRNA (guanine-N(1)-)-methyltransferase (236 aa).

S-adenosyl-L-methionine-binding positions include Gly110 and 129-134 (LGDFVL).

Belongs to the RNA methyltransferase TrmD family. In terms of assembly, homodimer.

It localises to the cytoplasm. It carries out the reaction guanosine(37) in tRNA + S-adenosyl-L-methionine = N(1)-methylguanosine(37) in tRNA + S-adenosyl-L-homocysteine + H(+). Its function is as follows. Specifically methylates guanosine-37 in various tRNAs. The chain is tRNA (guanine-N(1)-)-methyltransferase from Clostridium perfringens (strain ATCC 13124 / DSM 756 / JCM 1290 / NCIMB 6125 / NCTC 8237 / Type A).